Here is a 138-residue protein sequence, read N- to C-terminus: Large ribosomal subunit protein bL17 (138 aa).

Positions Arg118–Ala138 are disordered.

Belongs to the bacterial ribosomal protein bL17 family. As to quaternary structure, part of the 50S ribosomal subunit. Contacts protein L32.

The polypeptide is Large ribosomal subunit protein bL17 (Rhodopseudomonas palustris (strain HaA2)).